The sequence spans 487 residues: Calcium-dependent mitochondrial ATP-magnesium/phosphate carrier protein 2 (487 aa).

At 1–211 the chain is on the mitochondrial intermembrane side; sequence MEATKSSKQN…ISKHIKRSNY (211 aa). EF-hand domains follow at residues 36-71, 72-107, 108-138, and 139-174; these read ERDL…LQIP, SGYK…KELE, LYRI…AGIE, and IKDE…YPHE. Aspartate 85, asparagine 87, aspartate 89, arginine 91, and glutamate 96 together coordinate Ca(2+). 4 residues coordinate Ca(2+): aspartate 152, aspartate 154, aspartate 156, and glutamate 163. Solcar repeat units follow at residues 206-289, 301-389, and 400-483; these read IKRS…FKNA, IGTT…LKDL, and PGPL…MKKS. The helical transmembrane segment at 212–229 threads the bilayer; sequence FIAGGIAGAASRTATAPL. The Mitochondrial matrix segment spans residues 230–263; sequence DRLKVLLQIQKTDARIREAIKLIWKQGGVRGFFR. A helical membrane pass occupies residues 264–283; the sequence is GNGLNIVKVAPESAIKFYAY. Residues 284-310 lie on the Mitochondrial intermembrane side of the membrane; that stretch reads ELFKNAIGENMGEDKADIGTTVRLFAG. Residues 311 to 324 form a helical membrane-spanning segment; the sequence is GMAGAVAQASIYPL. The Mitochondrial matrix segment spans residues 325–363; it reads DLVKTRLQTYTSQAGVAVPRLGTLTKDILVHEGPRAFYK. The helical transmembrane segment at 364–383 threads the bilayer; it reads GLFPSLLGIIPYAGIDLAAY. Over 384-405 the chain is Mitochondrial intermembrane; it reads ETLKDLSRTYILQDAEPGPLVQ. Residues 406-423 form a helical membrane-spanning segment; that stretch reads LGCGTISGALGATCVYPL. At 424-457 the chain is on the mitochondrial matrix side; the sequence is QVVRTRMQAERARTSMSGVFRRTISEEGYRALYK. Residues 458 to 477 form a helical membrane-spanning segment; the sequence is GLLPNLLKVVPAASITYMVY. The Mitochondrial intermembrane segment spans residues 478–487; that stretch reads EAMKKSLELD.

It belongs to the mitochondrial carrier (TC 2.A.29) family. As to expression, expressed in flowers, leaves, stems, roots and seedlings, mostly in aerial parts.

It is found in the mitochondrion inner membrane. Its activity is regulated as follows. Counter-exchange transport activity is saturable and inhibited by pyridoxal-5'-phosphate, EDTA and EGTA. Activated by calcium Ca(2+) and manganese Mn(2+) ions, and slightly by iron Fe(2+) and zinc Zn(2+) ions. Repressed by copper ions Cu(2+) and slightly by magnesium Mg(2+) ions. Magnesium Mg(2+) ions promotes slightly ATP uptake, ATP-Mg(2+) being exchanged with ATP(4-). Functionally, calcium-dependent mitochondrial carrier protein that catalyzes the import of ATP co-transported with metal divalent cations across the mitochondrial inner membrane in exchange for phosphate (Pi). Can transport phosphate, AMP, ADP, ATP, adenosine 5'-phosphosulfate, sulfate and thiosulfate, and, to a lesser extent, other nucleotides. Binds calcium ions Ca(2+). Also mediates calcium uptake. This is Calcium-dependent mitochondrial ATP-magnesium/phosphate carrier protein 2 from Arabidopsis thaliana (Mouse-ear cress).